A 79-amino-acid chain; its full sequence is Large ribosomal subunit protein bL31 (79 aa).

It belongs to the bacterial ribosomal protein bL31 family. Type A subfamily. Part of the 50S ribosomal subunit.

Functionally, binds the 23S rRNA. This is Large ribosomal subunit protein bL31 from Synechococcus sp. (strain CC9902).